The primary structure comprises 569 residues: MRKGRHMPRHTNANYARPGVSPNHPMFGRYLSTVGFPPAQNVYNHWRHWYQPGHLWWTQPPQLQHPSSSFSTVRHPFNRPPRPPDPYQWSSWRQTGVLPHTRGLHLSAGLMESTDRPPPQKRRKSAEGEISQRSPQHSPPKGSRSPKGSPEWLRNVSSIEVANRTSAVPELKRHWEDLSHLCKAAPSVNRGKQKWPFDFSVMSYNILSQDLLCDNTYLYRHCNPPVLDWRNRFPNIIKELEQYSADIMCLQEVQEDHYKQQIKPSLESLGYHCEFKRRTGLKPDGCAVIFKRERFSLVSCHPVEYFRRGVPLMDRDNVGLIVLLRPIDPHVSLSNICVANTHLLYNPRRGDIKLAQLAMLLAEISRVSQLPDSSVCPVLLCGDFNSVPWSPLYRFIKDRRLDYDGMPIGKVSGQEETPRGQRILTVPIWPRSLGISQQCQYENQTRDSELRDLEQTERESFTEASIEHCLRLTSAYSHHLKESGQPEITTCHSRTAITVDYIFYSAALGDVMAQAEYSAPPERGLQLLGRLALVGEKELQKVNGLPNQHNSSDHLPLLTRFRLHPQADS.

Disordered stretches follow at residues 1–22, 63–92, and 109–155; these read MRKGRHMPRHTNANYARPGVSP, LQHPSSSFSTVRHPFNRPPRPPDPYQWSSW, and GLME…WLRN. Over residues 63-72 the composition is skewed to polar residues; it reads LQHPSSSFST. The segment covering 139 to 150 has biased composition (low complexity); it reads PPKGSRSPKGSP.

The protein belongs to the CCR4/nocturin family.

This Danio rerio (Zebrafish) protein is Protein angel homolog 2 (angel2).